The primary structure comprises 107 residues: Benzene 1,2-dioxygenase system ferredoxin subunit (107 aa).

The 96-residue stretch at 4-99 (TYILRQSDLP…IKVEGDEVHV (96 aa)) folds into the Rieske domain. Residues C43, H45, C62, and H65 each contribute to the [2Fe-2S] cluster site.

Belongs to the bacterial ring-hydroxylating dioxygenase ferredoxin component family. As to quaternary structure, this dioxygenase system consists of four proteins: the two subunits of the hydroxylase component (BnzA and BnzB), a ferredoxin (BnzC) and a ferredoxin reductase (BnzD).

It functions in the pathway aromatic compound metabolism; benzene degradation; catechol from benzene: step 1/2. Its function is as follows. This protein seems to be a 2Fe-2S ferredoxin. The protein is Benzene 1,2-dioxygenase system ferredoxin subunit (bnzC) of Pseudomonas putida (Arthrobacter siderocapsulatus).